Here is a 214-residue protein sequence, read N- to C-terminus: Ribosomal RNA small subunit methyltransferase G (214 aa).

S-adenosyl-L-methionine contacts are provided by residues Gly-56, Phe-61, 107 to 108 (IE), and Arg-125.

It belongs to the methyltransferase superfamily. RNA methyltransferase RsmG family.

Its subcellular location is the cytoplasm. Specifically methylates the N7 position of a guanine in 16S rRNA. This chain is Ribosomal RNA small subunit methyltransferase G, found in Syntrophomonas wolfei subsp. wolfei (strain DSM 2245B / Goettingen).